The chain runs to 423 residues: Endochitinase 42 (423 aa).

A signal peptide spans 1 to 22 (MLSFLGKSVALLAALQATLSSP). A propeptide spanning residues 23–34 (KPGHRRASVEKR) is cleaved from the precursor. Residues 38–401 (YANSVYFTNW…GTSHRALGGL (364 aa)) enclose the GH18 domain. Chitin is bound by residues 102–103 (GT) and 129–132 (GGWT). Catalysis depends on glutamate 171, which acts as the Proton donor. Tyrosine 172 is a chitin binding site. Asparagine 218 carries an N-linked (GlcNAc...) asparagine glycan. Residues 237 to 240 (MAYD) and tryptophan 378 each bind chitin.

Belongs to the glycosyl hydrolase 18 family. Chitinase class V subfamily.

The protein resides in the secreted. It carries out the reaction Random endo-hydrolysis of N-acetyl-beta-D-glucosaminide (1-&gt;4)-beta-linkages in chitin and chitodextrins.. In terms of biological role, secreted chitinase involved in the degradation of chitin, a component of the cell walls of fungi and exoskeletal elements of some animals (including worms and arthropods). Plays a morphogenetic role during apical growth, cell division and differentiation (cell wall morphogenesis). Also acts as an antifungal agent. Involved in the degradation and further assimilation of phytopathogenic fungi, namely mycoparasitism, the major mechanism accounting for the antagonistic activity against phytopathogenic fungi displayed by Trichoderma. The chain is Endochitinase 42 (chit42) from Trichoderma harzianum (Hypocrea lixii).